Here is a 153-residue protein sequence, read N- to C-terminus: Methylglyoxal synthase (153 aa).

The 148-residue stretch at 6 to 153 (RTIAARKHIA…QRYLAERLPS (148 aa)) folds into the MGS-like domain. Substrate-binding positions include His-19, Lys-23, 45-48 (TGTT), and 65-66 (SG). Catalysis depends on Asp-71, which acts as the Proton donor/acceptor. His-98 provides a ligand contact to substrate.

This sequence belongs to the methylglyoxal synthase family.

The enzyme catalyses dihydroxyacetone phosphate = methylglyoxal + phosphate. Its function is as follows. Catalyzes the formation of methylglyoxal from dihydroxyacetone phosphate. The polypeptide is Methylglyoxal synthase (Sodalis glossinidius (strain morsitans)).